A 283-amino-acid polypeptide reads, in one-letter code: MAGNFWQSSHYLQWILDKQDLLKERQKDLKFLSEEEYWKLQIFFTNVIQALGEHLKLRQQVIATATVYFKRFYARYSLKSIDPVLMAPTCVFLASKVEEFGVVSNTRLISAATSVLKTRFSYAFPKEFPYRMNHILECEFYLLELMDCCLIVYHPYRPLLQYVQDMGQEDMLLPLAWRIVNDTYRTDLCLLYPPFMIALACLHVACVVQQKDARQWFAELSVDMEKILEIIRVILKLYEQWKNFDERKEMATILSKMPKPKPPPNSEGEQGPNGSQNSSYSQS.

Residues 46-144 form the Cyclin N-terminal domain; it reads NVIQALGEHL…ILECEFYLLE (99 aa). The interval 252-283 is disordered; the sequence is TILSKMPKPKPPPNSEGEQGPNGSQNSSYSQS. Over residues 272–283 the composition is skewed to polar residues; sequence PNGSQNSSYSQS.

It belongs to the cyclin family. Cyclin C subfamily. Component of the Mediator complex. The cylin/CDK pair formed by CCNC/CDK8 also associates with the large subunit of RNA polymerase II.

The protein localises to the nucleus. In terms of biological role, component of the Mediator complex, a coactivator involved in regulated gene transcription of nearly all RNA polymerase II-dependent genes. Mediator functions as a bridge to convey information from gene-specific regulatory proteins to the basal RNA polymerase II transcription machinery. Mediator is recruited to promoters by direct interactions with regulatory proteins and serves as a scaffold for the assembly of a functional preinitiation complex with RNA polymerase II and the general transcription factors. Binds to and activates cyclin-dependent kinase CDK8 that phosphorylates the CTD (C-terminal domain) of the large subunit of RNA polymerase II (RNAp II), which may inhibit the formation of a transcription initiation complex. In Gallus gallus (Chicken), this protein is Cyclin-C (CCNC).